A 316-amino-acid chain; its full sequence is Porphobilinogen deaminase (316 aa).

At cysteine 240 the chain carries S-(dipyrrolylmethanemethyl)cysteine.

Belongs to the HMBS family. As to quaternary structure, monomer. The cofactor is dipyrromethane.

It catalyses the reaction 4 porphobilinogen + H2O = hydroxymethylbilane + 4 NH4(+). The protein operates within porphyrin-containing compound metabolism; protoporphyrin-IX biosynthesis; coproporphyrinogen-III from 5-aminolevulinate: step 2/4. Its function is as follows. Tetrapolymerization of the monopyrrole PBG into the hydroxymethylbilane pre-uroporphyrinogen in several discrete steps. In Alkaliphilus metalliredigens (strain QYMF), this protein is Porphobilinogen deaminase.